The chain runs to 582 residues: MMNDKDLSTWQTFRRLWPTISPYKAGLIVAAIALILNAASDTFMLSLLKPLLDDGFGNSNSSILKWMPLAVIGLMVVRGVTGFVSSYCISWVSGKVVMHIRRRLFSHMMGMPVSFFDQQSTGTLLSRITYDSEQVAASSSSALVTVVREGASIIGLFIMMFYYSWQLSLILIVIAPIVSISIRLVSKRFRNISKNMQNTMGEVTTSAEQMLKGHKEVLIFGGQKVETERFDAVSNRMRQQGMKLVSASSISDPIIQLIASFALALVLYAASFPSVMETLTAGTITVVFSAMIALMRPLKSLTNVNTQFQRGMAACQTLFSILDMEQEKDEGKLEVERAKGDIEFRHVTFYYPGKDTPALNDINIHLEAGKTVALVGRSGSGKSTIANLLTRFYDVSEGSILLDGHDLRDYRLGALRNQVALVSQNVHLFNDTVANNIAYARNEQYSRAEIEEAARMAYAMDFINKMEHGLDTVIGENGIMLSGGQRQRIAIARALLRNCPILILDEATSALDTESERAIQAALDELQKNRTSLVIAHRLSTIEKADEIVVIEDGRIVERGVHAELLVQQGVYAQLNRMQFGQ.

5 consecutive transmembrane segments (helical) span residues 25 to 45 (AGLI…TFML), 69 to 89 (LAVI…SYCI), 137 to 159 (ASSS…LFIM), 253 to 273 (PIIQ…ASFP), and 275 to 295 (VMET…IALM). Residues 28–310 (IVAAIALILN…LTNVNTQFQR (283 aa)) form the ABC transmembrane type-1 domain. In terms of domain architecture, ABC transporter spans 342 to 578 (IEFRHVTFYY…QGVYAQLNRM (237 aa)). 376–383 (GRSGSGKS) is an ATP binding site.

This sequence belongs to the ABC transporter superfamily. Lipid exporter (TC 3.A.1.106) family. In terms of assembly, homodimer.

The protein resides in the cell inner membrane. The catalysed reaction is ATP + H2O + lipid A-core oligosaccharideSide 1 = ADP + phosphate + lipid A-core oligosaccharideSide 2.. In terms of biological role, involved in lipopolysaccharide (LPS) biosynthesis. Translocates lipid A-core from the inner to the outer leaflet of the inner membrane. Transmembrane domains (TMD) form a pore in the inner membrane and the ATP-binding domain (NBD) is responsible for energy generation. The protein is ATP-dependent lipid A-core flippase of Yersinia pestis bv. Antiqua (strain Antiqua).